Here is a 1848-residue protein sequence, read N- to C-terminus: Chitin synthase E (1848 aa).

Residues 1–17 (MAAPSPAGGAPSHAQSS) show a composition bias toward low complexity. Residues 1-22 (MAAPSPAGGAPSHAQSSLPSLP) form a disordered region. One can recognise a Myosin motor domain in the interval 1–779 (MAAPSPAGGA…CWADLAKVGE (779 aa)). Residue 102–109 (GESGSGKT) coordinates ATP. The interval 593–621 (SSKPLRMPSMARRKTSPSSRLAFDAGDAD) is disordered. The actin-binding stretch occupies residues 659–683 (LDIVNKCLSSTNLNPYFIFCLKPND). 2 helical membrane passes run 889 to 909 (WIALVYLLTFYIPDFAIKLFG) and 928 to 948 (LIIWFSCGVAIFFIVAFPGLV). The region spanning 952 to 1040 (QHVYSAAELS…LLDYRPTNIS (89 aa)) is the Cytochrome b5 heme-binding domain. Residues N1038 and N1063 are each glycosylated (N-linked (GlcNAc...) asparagine). A helical membrane pass occupies residues 1200 to 1220 (FILAISVLICSIIVFKFLAAL). N-linked (GlcNAc...) asparagine glycans are attached at residues N1423, N1457, and N1563. The next 3 membrane-spanning stretches (helical) occupy residues 1595–1615 (LSTVIQPVTLAYIIYLIYWLV), 1621–1641 (IPYTSLILLAAIYGLQALIFI), and 1648–1668 (MVGWMIVYLLALPVFSLALPL). An N-linked (GlcNAc...) asparagine glycan is attached at N1786. Residues 1790–1845 (LPSDDAILAEIREILRTADLMSVTKKSIKLELERRFGVNLDLKRPYINSATEAVLA) form the DEK-C domain.

The protein in the N-terminal section; belongs to the TRAFAC class myosin-kinesin ATPase superfamily. Myosin family. In the C-terminal section; belongs to the chitin synthase family. Class V subfamily.

It localises to the cell membrane. The protein resides in the cell septum. It is found in the cell tip. The catalysed reaction is [(1-&gt;4)-N-acetyl-beta-D-glucosaminyl](n) + UDP-N-acetyl-alpha-D-glucosamine = [(1-&gt;4)-N-acetyl-beta-D-glucosaminyl](n+1) + UDP + H(+). In terms of biological role, polymerizes chitin, a structural polymer of the cell wall and septum, by transferring the sugar moiety of UDP-GlcNAc to the non-reducing end of the growing chitin polymer. Important for hyphal growth and conidiophore development but not pathogenicity. The protein is Chitin synthase E of Aspergillus fumigatus (strain ATCC MYA-4609 / CBS 101355 / FGSC A1100 / Af293) (Neosartorya fumigata).